Here is a 260-residue protein sequence, read N- to C-terminus: Phosphate import ATP-binding protein PstB 1 (260 aa).

The 243-residue stretch at 13-255 folds into the ABC transporter domain; that stretch reads ISARDLNVHY…PQHPLTQGYI (243 aa). 45-52 provides a ligand contact to ATP; it reads GPSGCGKS.

This sequence belongs to the ABC transporter superfamily. Phosphate importer (TC 3.A.1.7) family. In terms of assembly, the complex is composed of two ATP-binding proteins (PstB), two transmembrane proteins (PstC and PstA) and a solute-binding protein (PstS).

The protein resides in the cell inner membrane. The catalysed reaction is phosphate(out) + ATP + H2O = ADP + 2 phosphate(in) + H(+). Functionally, part of the ABC transporter complex PstSACB involved in phosphate import. Responsible for energy coupling to the transport system. This chain is Phosphate import ATP-binding protein PstB 1, found in Paramagnetospirillum magneticum (strain ATCC 700264 / AMB-1) (Magnetospirillum magneticum).